A 73-amino-acid polypeptide reads, in one-letter code: Putative membrane protein insertion efficiency factor (73 aa).

It belongs to the UPF0161 family.

The protein localises to the cell inner membrane. In terms of biological role, could be involved in insertion of integral membrane proteins into the membrane. This Phocaeicola vulgatus (strain ATCC 8482 / DSM 1447 / JCM 5826 / CCUG 4940 / NBRC 14291 / NCTC 11154) (Bacteroides vulgatus) protein is Putative membrane protein insertion efficiency factor.